The primary structure comprises 337 residues: Glyceraldehyde-3-phosphate dehydrogenase (337 aa).

Residues 11–12 (TI) and glycine 110 contribute to the NAD(+) site. A D-glyceraldehyde 3-phosphate-binding site is contributed by 139 to 141 (SCN). Cysteine 140 (nucleophile) is an active-site residue. Residue arginine 168 participates in NAD(+) binding. 194–195 (HG) is a D-glyceraldehyde 3-phosphate binding site. Residue glutamine 301 participates in NAD(+) binding.

This sequence belongs to the glyceraldehyde-3-phosphate dehydrogenase family. Homotetramer.

It is found in the cytoplasm. It catalyses the reaction D-glyceraldehyde 3-phosphate + phosphate + NADP(+) = (2R)-3-phospho-glyceroyl phosphate + NADPH + H(+). The catalysed reaction is D-glyceraldehyde 3-phosphate + phosphate + NAD(+) = (2R)-3-phospho-glyceroyl phosphate + NADH + H(+). Its pathway is carbohydrate degradation; glycolysis; pyruvate from D-glyceraldehyde 3-phosphate: step 1/5. The sequence is that of Glyceraldehyde-3-phosphate dehydrogenase (gap) from Methanothermobacter thermautotrophicus (strain ATCC 29096 / DSM 1053 / JCM 10044 / NBRC 100330 / Delta H) (Methanobacterium thermoautotrophicum).